A 404-amino-acid polypeptide reads, in one-letter code: Glucose-1-phosphate adenylyltransferase (404 aa).

Residues Tyr99, Gly164, Glu179 to Lys180, and Ser197 contribute to the alpha-D-glucose 1-phosphate site.

The protein belongs to the bacterial/plant glucose-1-phosphate adenylyltransferase family.

It catalyses the reaction alpha-D-glucose 1-phosphate + ATP + H(+) = ADP-alpha-D-glucose + diphosphate. It participates in glycan biosynthesis; glycogen biosynthesis. In terms of biological role, involved in the biosynthesis of ADP-glucose, a building block, required in the biosynthesis of maltose-1-phosphate (M1P) and in the elongation reactions to produce linear alpha-1,4-glucans. Catalyzes the reaction between ATP and alpha-D-glucose 1-phosphate (G1P) to produce pyrophosphate and ADP-Glc. The sequence is that of Glucose-1-phosphate adenylyltransferase from Mycolicibacterium vanbaalenii (strain DSM 7251 / JCM 13017 / BCRC 16820 / KCTC 9966 / NRRL B-24157 / PYR-1) (Mycobacterium vanbaalenii).